The primary structure comprises 440 residues: Acyltransferase Pun1 (440 aa).

Active-site proton acceptor residues include His-169 and Asp-384.

Belongs to the plant acyltransferase family.

It catalyses the reaction vanillylamine + (6E)-8-methylnon-6-enoyl-CoA = capsaicin + CoA + H(+). It carries out the reaction (6E)-8-methylnon-6-enoyl-CoA + 4-hydroxy-3-methoxy-benzenemethanol = capsiate + CoA. In terms of biological role, involved in the biosynthesis of capsaicinoids and capsinoids natural products, pungent alkaloids synthesized from phenylpropanoid intermediates in the placental tissue of chili pepper fruit acting as repellant on herbivorous mammals and conferring spiciness to hot peppers. Catalyzes the biosynthesis of capsaicin, a pungent component, and of capsiate, a non-pungent component, from vanillylamine and vanillyl alcohol, respectively. Can transfer an acyl from 8-methylnon-6-enoyl-CoA to vanillylamine forming capsaicin and CoA. In Capsicum frutescens (Cayenne pepper), this protein is Acyltransferase Pun1.